The primary structure comprises 319 residues: Lipoyl synthase (319 aa).

The tract at residues 1–29 is disordered; sequence MVVVVDTVSDKPIRPRHPEKAARPDALSP. Positions 8–29 are enriched in basic and acidic residues; the sequence is VSDKPIRPRHPEKAARPDALSP. [4Fe-4S] cluster-binding residues include C61, C66, C72, C87, C91, C94, and S300. Residues 73 to 289 form the Radical SAM core domain; the sequence is WDRKHATFMI…ESLAYAKGFL (217 aa).

This sequence belongs to the radical SAM superfamily. Lipoyl synthase family. The cofactor is [4Fe-4S] cluster.

The protein localises to the cytoplasm. It catalyses the reaction [[Fe-S] cluster scaffold protein carrying a second [4Fe-4S](2+) cluster] + N(6)-octanoyl-L-lysyl-[protein] + 2 oxidized [2Fe-2S]-[ferredoxin] + 2 S-adenosyl-L-methionine + 4 H(+) = [[Fe-S] cluster scaffold protein] + N(6)-[(R)-dihydrolipoyl]-L-lysyl-[protein] + 4 Fe(3+) + 2 hydrogen sulfide + 2 5'-deoxyadenosine + 2 L-methionine + 2 reduced [2Fe-2S]-[ferredoxin]. It participates in protein modification; protein lipoylation via endogenous pathway; protein N(6)-(lipoyl)lysine from octanoyl-[acyl-carrier-protein]: step 2/2. Catalyzes the radical-mediated insertion of two sulfur atoms into the C-6 and C-8 positions of the octanoyl moiety bound to the lipoyl domains of lipoate-dependent enzymes, thereby converting the octanoylated domains into lipoylated derivatives. This chain is Lipoyl synthase, found in Rhodopseudomonas palustris (strain BisA53).